The sequence spans 355 residues: uncharacterized protein (355 aa).

The region spanning Asp9–Gly75 is the J domain.

Belongs to the DnaJ family.

It is found in the cytoplasm. This is an uncharacterized protein from Schizosaccharomyces pombe (strain 972 / ATCC 24843) (Fission yeast).